A 197-amino-acid polypeptide reads, in one-letter code: Rac-like GTP-binding protein RAC1 (197 aa).

13 to 20 (GDGAVGKT) provides a ligand contact to GTP. The short motif at 35 to 43 (YVPTVFDNF) is the Effector region element. Residues 60-64 (DTAGQ) and 118-121 (TKLD) each bind GTP. Cysteine 194 is modified (cysteine methyl ester). A lipid anchor (S-geranylgeranyl cysteine) is attached at cysteine 194. Residues 195-197 (SIL) constitute a propeptide, removed in mature form.

This sequence belongs to the small GTPase superfamily. Rho family.

It localises to the cytoplasm. It is found in the membrane. Its function is as follows. Inactive GDP-bound Rho GTPases reside in the cytosol, are found in a complex with Rho GDP-dissociation inhibitors (Rho GDIs), and are released from the GDI protein in order to translocate to membranes upon activation. In Lotus japonicus (Lotus corniculatus var. japonicus), this protein is Rac-like GTP-binding protein RAC1 (RAC1).